A 190-amino-acid chain; its full sequence is Bifunctional protein PyrR (190 aa).

The PRPP-binding signature appears at 107–119 (IILVDDVLYSGRT).

Belongs to the purine/pyrimidine phosphoribosyltransferase family. PyrR subfamily.

It catalyses the reaction UMP + diphosphate = 5-phospho-alpha-D-ribose 1-diphosphate + uracil. Regulates the transcription of the pyrimidine nucleotide (pyr) operon in response to exogenous pyrimidines. Its function is as follows. Also displays a weak uracil phosphoribosyltransferase activity which is not physiologically significant. In Corynebacterium diphtheriae (strain ATCC 700971 / NCTC 13129 / Biotype gravis), this protein is Bifunctional protein PyrR.